A 254-amino-acid chain; its full sequence is Fasciclin-like arabinogalactan protein 7 (254 aa).

The N-terminal stretch at 1 to 22 is a signal peptide; sequence MAKMQLSIFIAVVALIVCSASA. Residues 44–186 enclose the FAS1 domain; it reads NVNLTELLSV…VAVYQVNRVL (143 aa). Residues asparagine 46, asparagine 78, asparagine 104, and asparagine 130 are each glycosylated (N-linked (GlcNAc...) asparagine). Positions 203-233 are disordered; sequence APAPIVSAPSDSPSVADSEGASSPKSSHKNS. Low complexity predominate over residues 206–220; it reads PIVSAPSDSPSVADS. The span at 222 to 233 shows a compositional bias: polar residues; the sequence is GASSPKSSHKNS. A lipid anchor (GPI-anchor amidated asparagine) is attached at asparagine 232. Positions 233–254 are cleaved as a propeptide — removed in mature form; the sequence is SGQKLLLAPISMVISGLVALFL.

It belongs to the fasciclin-like AGP family.

The protein resides in the cell membrane. In terms of biological role, may be a cell surface adhesion protein. The sequence is that of Fasciclin-like arabinogalactan protein 7 (FLA7) from Arabidopsis thaliana (Mouse-ear cress).